The chain runs to 160 residues: MRISIFAVGRLKSGPEKDLAARYIERLAKTGPAIGLEFSRVIEVGESRASNAETRKREEAAMLEKHLADGAVLVLLDERGKALDSPAFASLFGDLRDSGKRDLVIAIGGADGLDSALYDKATAVLNLGKLTWPHQIVRILIAEQLYRAVTILSGHPYHRV.

S-adenosyl-L-methionine contacts are provided by residues L76, G108, and 127–132 (LGKLTW).

It belongs to the RNA methyltransferase RlmH family. In terms of assembly, homodimer.

Its subcellular location is the cytoplasm. The enzyme catalyses pseudouridine(1915) in 23S rRNA + S-adenosyl-L-methionine = N(3)-methylpseudouridine(1915) in 23S rRNA + S-adenosyl-L-homocysteine + H(+). Specifically methylates the pseudouridine at position 1915 (m3Psi1915) in 23S rRNA. The chain is Ribosomal RNA large subunit methyltransferase H from Agrobacterium fabrum (strain C58 / ATCC 33970) (Agrobacterium tumefaciens (strain C58)).